Reading from the N-terminus, the 397-residue chain is Exodeoxyribonuclease 7 large subunit (397 aa).

It belongs to the XseA family. Heterooligomer composed of large and small subunits.

Its subcellular location is the cytoplasm. The enzyme catalyses Exonucleolytic cleavage in either 5'- to 3'- or 3'- to 5'-direction to yield nucleoside 5'-phosphates.. In terms of biological role, bidirectionally degrades single-stranded DNA into large acid-insoluble oligonucleotides, which are then degraded further into small acid-soluble oligonucleotides. The protein is Exodeoxyribonuclease 7 large subunit of Anaplasma marginale (strain Florida).